Here is a 1217-residue protein sequence, read N- to C-terminus: Splicing factor 3B subunit 3 (1217 aa).

This sequence belongs to the RSE1 family. In terms of assembly, component of the 17S U2 SnRNP complex, a ribonucleoprotein complex that contains small nuclear RNA (snRNA) U2 and a number of specific proteins. Part of the SF3B subcomplex of the 17S U2 SnRNP complex. SF3B associates with the splicing subcomplex SF3A and a 12S RNA unit to form the U2 small nuclear ribonucleoproteins complex (U2 snRNP). Component of the minor (U12-type spliceosome) spliceosome.

The protein localises to the nucleus. Component of the 17S U2 SnRNP complex of the spliceosome, a large ribonucleoprotein complex that removes introns from transcribed pre-mRNAs. The 17S U2 SnRNP complex (1) directly participates in early spliceosome assembly and (2) mediates recognition of the intron branch site during pre-mRNA splicing by promoting the selection of the pre-mRNA branch-site adenosine, the nucleophile for the first step of splicing. Within the 17S U2 SnRNP complex, SF3B3 is part of the SF3B subcomplex, which is required for 'A' complex assembly formed by the stable binding of U2 snRNP to the branchpoint sequence in pre-mRNA. Also acts as a component of the minor spliceosome, which is involved in the splicing of U12-type introns in pre-mRNAs. This chain is Splicing factor 3B subunit 3 (sf3b3), found in Danio rerio (Zebrafish).